The sequence spans 437 residues: Aminopeptidase G (437 aa).

Catalysis depends on residues cysteine 70, histidine 361, and asparagine 382.

The protein belongs to the peptidase C1 family.

The protein resides in the cytoplasm. This is Aminopeptidase G (pepG) from Lactobacillus delbrueckii subsp. lactis.